Here is a 232-residue protein sequence, read N- to C-terminus: Large ribosomal subunit protein uL1 (232 aa).

Belongs to the universal ribosomal protein uL1 family. In terms of assembly, part of the 50S ribosomal subunit.

Functionally, binds directly to 23S rRNA. The L1 stalk is quite mobile in the ribosome, and is involved in E site tRNA release. Its function is as follows. Protein L1 is also a translational repressor protein, it controls the translation of the L11 operon by binding to its mRNA. The sequence is that of Large ribosomal subunit protein uL1 from Levilactobacillus brevis (strain ATCC 367 / BCRC 12310 / CIP 105137 / JCM 1170 / LMG 11437 / NCIMB 947 / NCTC 947) (Lactobacillus brevis).